The following is a 104-amino-acid chain: uncharacterized protein (104 aa).

This sequence belongs to the mimivirus L28/L54 family.

This is an uncharacterized protein from Acanthamoeba polyphaga mimivirus (APMV).